Here is a 158-residue protein sequence, read N- to C-terminus: Small ribosomal subunit protein uS15 (158 aa).

Residues 1-10 show a composition bias toward basic residues; the sequence is MARMHTRRRG. The tract at residues 1–66 is disordered; sequence MARMHTRRRG…EGVKGTPIPD (66 aa). Acidic residues predominate over residues 21–32; it reads DPPEWSDIDADA. Over residues 33–45 the composition is skewed to basic and acidic residues; that stretch reads IEERVVELAEQGH.

This sequence belongs to the universal ribosomal protein uS15 family. Part of the 30S ribosomal subunit.

This chain is Small ribosomal subunit protein uS15, found in Haloquadratum walsbyi (strain DSM 16790 / HBSQ001).